The sequence spans 194 residues: Peptidyl-tRNA hydrolase (194 aa).

Tyr-16 serves as a coordination point for tRNA. His-21 (proton acceptor) is an active-site residue. Phe-67, Asn-69, and Asn-115 together coordinate tRNA.

The protein belongs to the PTH family. In terms of assembly, monomer.

It localises to the cytoplasm. It catalyses the reaction an N-acyl-L-alpha-aminoacyl-tRNA + H2O = an N-acyl-L-amino acid + a tRNA + H(+). In terms of biological role, hydrolyzes ribosome-free peptidyl-tRNAs (with 1 or more amino acids incorporated), which drop off the ribosome during protein synthesis, or as a result of ribosome stalling. Functionally, catalyzes the release of premature peptidyl moieties from peptidyl-tRNA molecules trapped in stalled 50S ribosomal subunits, and thus maintains levels of free tRNAs and 50S ribosomes. In Shigella dysenteriae serotype 1 (strain Sd197), this protein is Peptidyl-tRNA hydrolase.